Reading from the N-terminus, the 293-residue chain is Ribosomal protein L11 methyltransferase (293 aa).

S-adenosyl-L-methionine-binding residues include threonine 145, glycine 166, aspartate 188, and asparagine 230.

Belongs to the methyltransferase superfamily. PrmA family.

Its subcellular location is the cytoplasm. The enzyme catalyses L-lysyl-[protein] + 3 S-adenosyl-L-methionine = N(6),N(6),N(6)-trimethyl-L-lysyl-[protein] + 3 S-adenosyl-L-homocysteine + 3 H(+). Methylates ribosomal protein L11. The polypeptide is Ribosomal protein L11 methyltransferase (Actinobacillus pleuropneumoniae serotype 3 (strain JL03)).